Here is a 576-residue protein sequence, read N- to C-terminus: Arginine--tRNA ligase (576 aa).

Residues 122–132 (PNVAKEMHVGH) carry the 'HIGH' region motif.

Belongs to the class-I aminoacyl-tRNA synthetase family. As to quaternary structure, monomer.

The protein resides in the cytoplasm. The catalysed reaction is tRNA(Arg) + L-arginine + ATP = L-arginyl-tRNA(Arg) + AMP + diphosphate. This Sodalis glossinidius (strain morsitans) protein is Arginine--tRNA ligase.